Here is a 239-residue protein sequence, read N- to C-terminus: Small ribosomal subunit protein uS3 (239 aa).

The region spanning 39–107 (VREFLRKKLA…ATSINIEEIR (69 aa)) is the KH type-2 domain. Residues 215–239 (TSNTNELSDEKRNRRKPRNANRRKE) form a disordered region. A compositionally biased stretch (basic residues) spans 227–239 (NRRKPRNANRRKE).

This sequence belongs to the universal ribosomal protein uS3 family. Part of the 30S ribosomal subunit. Forms a tight complex with proteins S10 and S14.

Functionally, binds the lower part of the 30S subunit head. Binds mRNA in the 70S ribosome, positioning it for translation. The chain is Small ribosomal subunit protein uS3 from Dichelobacter nodosus (strain VCS1703A).